Consider the following 346-residue polypeptide: MDPARKAGAQAMIWTAGWLLLLLLRGGAQALECYSCVQKADDGCSPNKMKTVKCAPGVDVCTEAVGAVETIHGQFSLAVRGCGSGLPGKNDRGLDLHGLLAFIQLQQCAQDRCNAKLNLTSRALDPAGNESAYPPNGVECYSCVGLSREACQGTSPPVVSCYNASDHVYKGCFDGNVTLTAANVTVSLPVRGCVQDEFCTRDGVTGPGFTLSGSCCQGSRCNSDLRNKTYFSPRIPPLVRLPPPEPTTVASTTSVTTSTSAPVRPTSTTKPMPAPTSQTPRQGVEHEASRDEEPRLTGGAAGHQDRSNSGQYPAKGGPQQPHNKGCVAPTAGLAALLLAVAAGVLL.

An N-terminal signal peptide occupies residues 1–30 (MDPARKAGAQAMIWTAGWLLLLLLRGGAQA). 2 consecutive UPAR/Ly6 domains span residues 33–126 (CYSC…ALDP) and 140–222 (CYSC…SRCN). 4 N-linked (GlcNAc...) asparagine glycosylation sites follow: Asn-118, Asn-163, Asn-176, and Asn-183. The disordered stretch occupies residues 233 to 324 (PRIPPLVRLP…KGGPQQPHNK (92 aa)). Pro residues predominate over residues 234–246 (RIPPLVRLPPPEP). Over residues 247-269 (TTVASTTSVTTSTSAPVRPTSTT) the composition is skewed to low complexity. The segment covering 283–295 (GVEHEASRDEEPR) has biased composition (basic and acidic residues). The GPI-anchor amidated cysteine moiety is linked to residue Cys-326. Residues 327–346 (VAPTAGLAALLLAVAAGVLL) constitute a propeptide, removed in mature form.

As to quaternary structure, binds laminin-1 and laminin-5. Interacts with LGALS3. Interacts with AGR2 and AGR3. In terms of processing, N-glycosylated and O-glycosylated. In terms of tissue distribution, expressed in placenta, skin and urothelium. Found in suprabasal keratinocytes of chronic wounds. Weak expression is found in esophagus and peripheral blood mononuclear cells. Found in the majority of primary and metastatic transitional cell carcinomas (TCCs) and as well in breast cancer tissues, but not in adjacent normal tissues. High expression is found in the tumor component of some noninvasive superficial lesions and in invasive and metastatic urothelial cancers.

The protein localises to the cell membrane. Functionally, supports cell migration. May be involved in urothelial cell-matrix interactions. May be involved in tumor progression. The chain is Ly6/PLAUR domain-containing protein 3 (LYPD3) from Homo sapiens (Human).